A 289-amino-acid chain; its full sequence is Mitochondrial fission regulator 1-like (289 aa).

A Phosphothreonine modification is found at Thr27. Ser38 carries the post-translational modification Phosphoserine. At Ser100 the chain carries Phosphoserine; by AMPK. 3 positions are modified to phosphoserine: Ser107, Ser221, and Ser222. Ser235 is modified (phosphoserine; by AMPK). 2 positions are modified to phosphoserine: Ser258 and Ser270.

This sequence belongs to the MTFR1 family. Phosphorylated by AMPK. Upon stress, phosphorylation at Ser-100 and Ser-235 by AMPK is sufficient to induce mitochondrial fragmentation.

It localises to the mitochondrion outer membrane. Mitochondrial protein required for adaptation of miochondrial dynamics to metabolic changes. Regulates mitochondrial morphology at steady state and mediates AMPK-dependent stress-induced mitochondrial fragmentation via the control of OPA1 levels. The protein is Mitochondrial fission regulator 1-like (Mtfr1l) of Mus musculus (Mouse).